A 357-amino-acid polypeptide reads, in one-letter code: Holliday junction branch migration complex subunit RuvB (357 aa).

Over residues 1–15 (MAIQSDSLSSLPDSP) the composition is skewed to low complexity. Positions 1–30 (MAIQSDSLSSLPDSPRIVAPQPVSPNEESI) are disordered. Positions 13–195 (DSPRIVAPQP…FGIVSRLEFY (183 aa)) are large ATPase domain (RuvB-L). Residues leucine 34, arginine 35, glycine 76, lysine 79, threonine 80, threonine 81, 142–144 (EDF), arginine 185, tyrosine 195, and arginine 232 each bind ATP. Threonine 80 lines the Mg(2+) pocket. The segment at 196–266 (NTDELARIVT…AAGRALAMLD (71 aa)) is small ATPAse domain (RuvB-S). The tract at residues 269–357 (PQGLDVMDRK…SGGTGELFSK (89 aa)) is head domain (RuvB-H). The DNA site is built by arginine 305, arginine 324, and arginine 329.

It belongs to the RuvB family. Homohexamer. Forms an RuvA(8)-RuvB(12)-Holliday junction (HJ) complex. HJ DNA is sandwiched between 2 RuvA tetramers; dsDNA enters through RuvA and exits via RuvB. An RuvB hexamer assembles on each DNA strand where it exits the tetramer. Each RuvB hexamer is contacted by two RuvA subunits (via domain III) on 2 adjacent RuvB subunits; this complex drives branch migration. In the full resolvosome a probable DNA-RuvA(4)-RuvB(12)-RuvC(2) complex forms which resolves the HJ.

It is found in the cytoplasm. The enzyme catalyses ATP + H2O = ADP + phosphate + H(+). The RuvA-RuvB-RuvC complex processes Holliday junction (HJ) DNA during genetic recombination and DNA repair, while the RuvA-RuvB complex plays an important role in the rescue of blocked DNA replication forks via replication fork reversal (RFR). RuvA specifically binds to HJ cruciform DNA, conferring on it an open structure. The RuvB hexamer acts as an ATP-dependent pump, pulling dsDNA into and through the RuvAB complex. RuvB forms 2 homohexamers on either side of HJ DNA bound by 1 or 2 RuvA tetramers; 4 subunits per hexamer contact DNA at a time. Coordinated motions by a converter formed by DNA-disengaged RuvB subunits stimulates ATP hydrolysis and nucleotide exchange. Immobilization of the converter enables RuvB to convert the ATP-contained energy into a lever motion, pulling 2 nucleotides of DNA out of the RuvA tetramer per ATP hydrolyzed, thus driving DNA branch migration. The RuvB motors rotate together with the DNA substrate, which together with the progressing nucleotide cycle form the mechanistic basis for DNA recombination by continuous HJ branch migration. Branch migration allows RuvC to scan DNA until it finds its consensus sequence, where it cleaves and resolves cruciform DNA. This is Holliday junction branch migration complex subunit RuvB from Bordetella bronchiseptica (strain ATCC BAA-588 / NCTC 13252 / RB50) (Alcaligenes bronchisepticus).